A 233-amino-acid polypeptide reads, in one-letter code: Orotidine 5'-phosphate decarboxylase (233 aa).

Substrate contacts are provided by residues D9, K31, 58–67 (DLKLHDIPNT), T120, R182, Q191, G211, and R212. The Proton donor role is filled by K60.

It belongs to the OMP decarboxylase family. Type 1 subfamily. Homodimer.

It catalyses the reaction orotidine 5'-phosphate + H(+) = UMP + CO2. It participates in pyrimidine metabolism; UMP biosynthesis via de novo pathway; UMP from orotate: step 2/2. Catalyzes the decarboxylation of orotidine 5'-monophosphate (OMP) to uridine 5'-monophosphate (UMP). The chain is Orotidine 5'-phosphate decarboxylase from Listeria monocytogenes serotype 4b (strain CLIP80459).